A 96-amino-acid polypeptide reads, in one-letter code: Co-chaperonin GroES (96 aa).

It belongs to the GroES chaperonin family. In terms of assembly, heptamer of 7 subunits arranged in a ring. Interacts with the chaperonin GroEL.

The protein resides in the cytoplasm. Together with the chaperonin GroEL, plays an essential role in assisting protein folding. The GroEL-GroES system forms a nano-cage that allows encapsulation of the non-native substrate proteins and provides a physical environment optimized to promote and accelerate protein folding. GroES binds to the apical surface of the GroEL ring, thereby capping the opening of the GroEL channel. The sequence is that of Co-chaperonin GroES from Polaromonas sp. (strain JS666 / ATCC BAA-500).